Here is a 334-residue protein sequence, read N- to C-terminus: MPTEPYIQPMHVLNEAPILCIVGPTGAGKTHLAMSLAEHAKSIGLTIELISMDSALVYRGLDIGSAKPTKAEQDAFIHHLIDIIDPTEVYSAARFANDAKRLCLEIRERGNVPVVVGGTMLYWRAWAHGLSSLPPANSEIRARLDEEGKSIGWPAMHDKLAKVDPETAARLKPNDSQRVQRALEVFEIIGKPMSVLLADSPSEDGREGSAIPSWIDLISLEPRDRKRLHLNLEKRFDEMLTAEFMNEVKALHANTRLHTDLPAIRSVGYRQAWEFLNGEIDAEQMRYKALVATRQLGKRQLTWLRAIEGRKTFDPFNPEELKAALDYCKSNLKK.

23 to 30 contributes to the ATP binding site; the sequence is GPTGAGKT. Substrate is bound at residue 25–30; the sequence is TGAGKT. 2 interaction with substrate tRNA regions span residues 53–56 and 177–181; these read DSAL and QRVQR.

Belongs to the IPP transferase family. As to quaternary structure, monomer. The cofactor is Mg(2+).

The enzyme catalyses adenosine(37) in tRNA + dimethylallyl diphosphate = N(6)-dimethylallyladenosine(37) in tRNA + diphosphate. Functionally, catalyzes the transfer of a dimethylallyl group onto the adenine at position 37 in tRNAs that read codons beginning with uridine, leading to the formation of N6-(dimethylallyl)adenosine (i(6)A). The protein is tRNA dimethylallyltransferase of Polynucleobacter necessarius subsp. necessarius (strain STIR1).